We begin with the raw amino-acid sequence, 259 residues long: Pimeloyl-[acyl-carrier protein] methyl ester esterase (259 aa).

One can recognise an AB hydrolase-1 domain in the interval 16–244 (LVFIHGWGLN…ASHAPFLSHP (229 aa)). Substrate-binding positions include Trp-22, 82–83 (SL), and 143–147 (FFNIQ). Catalysis depends on Ser-82, which acts as the Nucleophile. Catalysis depends on residues Asp-207 and His-237. His-237 lines the substrate pocket.

The protein belongs to the AB hydrolase superfamily. Carboxylesterase BioH family. In terms of assembly, monomer.

The protein localises to the cytoplasm. The enzyme catalyses 6-carboxyhexanoyl-[ACP] methyl ester + H2O = 6-carboxyhexanoyl-[ACP] + methanol + H(+). The protein operates within cofactor biosynthesis; biotin biosynthesis. Functionally, the physiological role of BioH is to remove the methyl group introduced by BioC when the pimeloyl moiety is complete. It allows to synthesize pimeloyl-ACP via the fatty acid synthetic pathway through the hydrolysis of the ester bonds of pimeloyl-ACP esters. The polypeptide is Pimeloyl-[acyl-carrier protein] methyl ester esterase (Wigglesworthia glossinidia brevipalpis).